Consider the following 342-residue polypeptide: Glucan endo-1,3-beta-glucosidase (342 aa).

Positions 1-26 (MLASSPMLLFLLSLLMAYNFDTTAGQ) are cleaved as a signal peptide. The Proton donor role is filled by Glu119. Catalysis depends on Glu261, which acts as the Nucleophile.

The protein belongs to the glycosyl hydrolase 17 family. The N-terminus is blocked.

It is found in the vacuole. It catalyses the reaction Hydrolysis of (1-&gt;3)-beta-D-glucosidic linkages in (1-&gt;3)-beta-D-glucans.. Its function is as follows. Is thought to be an important plant defense-related product against fungal pathogens. Accumulation of the glucanase can be detected as early as 4 hours after inoculation. In Brassica campestris (Field mustard), this protein is Glucan endo-1,3-beta-glucosidase (BGL).